Reading from the N-terminus, the 122-residue chain is Large ribosomal subunit protein bL12 (122 aa).

This sequence belongs to the bacterial ribosomal protein bL12 family. As to quaternary structure, homodimer. Part of the ribosomal stalk of the 50S ribosomal subunit. Forms a multimeric L10(L12)X complex, where L10 forms an elongated spine to which 2 to 4 L12 dimers bind in a sequential fashion. Binds GTP-bound translation factors.

In terms of biological role, forms part of the ribosomal stalk which helps the ribosome interact with GTP-bound translation factors. Is thus essential for accurate translation. The sequence is that of Large ribosomal subunit protein bL12 from Deinococcus geothermalis (strain DSM 11300 / CIP 105573 / AG-3a).